The following is a 180-amino-acid chain: Free methionine-R-sulfoxide reductase (180 aa).

The 79-residue stretch at 99–177 folds into the GAF domain; that stretch reads GVCGTAASTK…KLAKLINKSC (79 aa).

This sequence belongs to the free Met sulfoxide reductase family.

Its subcellular location is the cytoplasm. The protein resides in the nucleus. The enzyme catalyses [thioredoxin]-disulfide + L-methionine + H2O = L-methionine (R)-S-oxide + [thioredoxin]-dithiol. In terms of biological role, catalyzes the reversible oxidation-reduction of the R-enantiomer of free methionine sulfoxide to methionine. Does not act on S-enantiomer of free methionine sulfoxide or R-enantiomer of dabsylated methionine sulfoxide. Involved in protection against oxidative stress. The protein is Free methionine-R-sulfoxide reductase of Saccharomyces cerevisiae (strain ATCC 204508 / S288c) (Baker's yeast).